The following is a 356-amino-acid chain: MLELSVNLDERSYPIYIGQSTLQDNGRLVHHIGDCRPIIITNDTIAPLYLQGLLAQLATLNPLHFIIPDGEQYKSLTWFEKISAFLLENNCGRDTCLIALGGGVVGDLTGFVAACYQRGIPFIQMPTTLLSQVDSSVGGKTAVNHPLGKNMIGAFYQPQAVFIDTQSLHTLPAREFAAGMAEVIKYGLIYDTELFAYLEQNVERLQQLDEACLQHIIYRCCEIKALIVAQDEKEQGLRALLNLGHTFAHAIEAQMGYGVWLHGEAVATGMVLAAKLAYTRQDLTAEDVTRISGLIAQYSLPTQIPAVMTSEHFLQHMRKDKKNKKGTIRFILPTQFGQCALVDDVSDDQVRALIEQ.

Residues 69–74, 103–107, 127–128, lysine 140, and lysine 149 contribute to the NAD(+) site; these read DGEQYK, GVVGD, and TT. Zn(2+)-binding residues include glutamate 182, histidine 245, and histidine 262.

It belongs to the sugar phosphate cyclases superfamily. Dehydroquinate synthase family. Requires Co(2+) as cofactor. The cofactor is Zn(2+). NAD(+) serves as cofactor.

It is found in the cytoplasm. The catalysed reaction is 7-phospho-2-dehydro-3-deoxy-D-arabino-heptonate = 3-dehydroquinate + phosphate. Its pathway is metabolic intermediate biosynthesis; chorismate biosynthesis; chorismate from D-erythrose 4-phosphate and phosphoenolpyruvate: step 2/7. Its function is as follows. Catalyzes the conversion of 3-deoxy-D-arabino-heptulosonate 7-phosphate (DAHP) to dehydroquinate (DHQ). In Pseudoalteromonas translucida (strain TAC 125), this protein is 3-dehydroquinate synthase.